The following is a 99-amino-acid chain: RNA-binding protein Hfq (99 aa).

Residues Asp9–Val68 form the Sm domain. The interval Pro64 to Glu99 is disordered. Positions His70 to Gln93 are enriched in low complexity.

Belongs to the Hfq family. Homohexamer.

RNA chaperone that binds small regulatory RNA (sRNAs) and mRNAs to facilitate mRNA translational regulation in response to envelope stress, environmental stress and changes in metabolite concentrations. Also binds with high specificity to tRNAs. This chain is RNA-binding protein Hfq, found in Pectobacterium atrosepticum (strain SCRI 1043 / ATCC BAA-672) (Erwinia carotovora subsp. atroseptica).